We begin with the raw amino-acid sequence, 973 residues long: Leucine--tRNA ligase, chloroplastic/mitochondrial (973 aa).

A 'HIGH' region motif is present at residues 126 to 135 (PSGAGLHVGH). A 'KMSKS' region motif is present at residues 730–734 (KMSKS). Position 733 (K733) interacts with ATP.

It belongs to the class-I aminoacyl-tRNA synthetase family.

The protein localises to the plastid. The protein resides in the chloroplast. It localises to the mitochondrion. It catalyses the reaction tRNA(Leu) + L-leucine + ATP = L-leucyl-tRNA(Leu) + AMP + diphosphate. Functionally, catalyzes the specific attachment of an amino acid to its cognate tRNA in a two step reaction: the amino acid (AA) is first activated by ATP to form AA-AMP and then transferred to the acceptor end of the tRNA. This is Leucine--tRNA ligase, chloroplastic/mitochondrial from Arabidopsis thaliana (Mouse-ear cress).